Reading from the N-terminus, the 171-residue chain is 3-hydroxydecanoyl-[acyl-carrier-protein] dehydratase (171 aa).

His70 is a catalytic residue.

It belongs to the thioester dehydratase family. FabA subfamily. Homodimer.

It is found in the cytoplasm. It catalyses the reaction a (3R)-hydroxyacyl-[ACP] = a (2E)-enoyl-[ACP] + H2O. It carries out the reaction (3R)-hydroxydecanoyl-[ACP] = (2E)-decenoyl-[ACP] + H2O. The enzyme catalyses (2E)-decenoyl-[ACP] = (3Z)-decenoyl-[ACP]. It participates in lipid metabolism; fatty acid biosynthesis. Functionally, necessary for the introduction of cis unsaturation into fatty acids. Catalyzes the dehydration of (3R)-3-hydroxydecanoyl-ACP to E-(2)-decenoyl-ACP and then its isomerization to Z-(3)-decenoyl-ACP. Can catalyze the dehydratase reaction for beta-hydroxyacyl-ACPs with saturated chain lengths up to 16:0, being most active on intermediate chain length. The chain is 3-hydroxydecanoyl-[acyl-carrier-protein] dehydratase from Stutzerimonas stutzeri (strain A1501) (Pseudomonas stutzeri).